Consider the following 329-residue polypeptide: ATP-dependent (S)-NAD(P)H-hydrate dehydratase (329 aa).

The N-terminal 28 residues, 1–28 (MALGPGCRAVRGCRPVLKRAFSLHKAHS), are a transit peptide targeting the mitochondrion. The 292-residue stretch at 35-326 (ILQLVRSVVP…AEVGPAFRRL (292 aa)) folds into the YjeF C-terminal domain. Lys49 carries the N6-acetyllysine modification. The residue at position 67 (Tyr67) is a Phosphotyrosine. (6S)-NADPHX contacts are provided by residues Gly135 and 188 to 194 (NHVEFGR). ATP-binding positions include 228 to 232 (KGEQD) and 247 to 256 (GSGRRCGGQG). A (6S)-NADPHX-binding site is contributed by Asp257.

This sequence belongs to the NnrD/CARKD family. The cofactor is Mg(2+).

It is found in the mitochondrion. The enzyme catalyses (6S)-NADHX + ATP = ADP + phosphate + NADH + H(+). It catalyses the reaction (6S)-NADPHX + ATP = ADP + phosphate + NADPH + H(+). Functionally, catalyzes the dehydration of the S-form of NAD(P)HX at the expense of ATP, which is converted to ADP. Together with NAD(P)HX epimerase, which catalyzes the epimerization of the S- and R-forms, the enzyme allows the repair of both epimers of NAD(P)HX, a damaged form of NAD(P)H that is a result of enzymatic or heat-dependent hydration. The protein is ATP-dependent (S)-NAD(P)H-hydrate dehydratase of Bos taurus (Bovine).